The chain runs to 2349 residues: Reducing polyketide synthase AFT16-1 (2349 aa).

A compositionally biased stretch (basic and acidic residues) spans 1 to 14 (MNGKSRDNGHDGKR). Disordered stretches follow at residues 1-21 (MNGK…VPAE) and 37-80 (TNPS…TSNS). In terms of domain architecture, Ketosynthase family 3 (KS3) spans 20-462 (AEPIAIVGTA…GTNAHTILES (443 aa)). Catalysis depends on for beta-ketoacyl synthase activity residues Cys194, His333, and His382. The segment at 578 to 888 (VFTGQGAQWP…LLYKGVLERF (311 aa)) is malonyl-CoA:ACP transacylase (MAT) domain. The segment at 958–1092 (HPLLGFRSVD…GDILLSHFAK (135 aa)) is N-terminal hotdog fold. Positions 958 to 1263 (HPLLGFRSVD…QVEGLKFSCM (306 aa)) are dehydratase (DH) domain. One can recognise a PKS/mFAS DH domain in the interval 958 to 1269 (HPLLGFRSVD…FSCMYPAQET (312 aa)). Residue His990 is the Proton acceptor; for dehydratase activity of the active site. The tract at residues 1111 to 1269 (MSSVEPSLFY…FSCMYPAQET (159 aa)) is C-terminal hotdog fold. Asp1170 (proton donor; for dehydratase activity) is an active-site residue. Positions 1976-2164 (SPNKTYLLVG…VVGVGYVARA (189 aa)) are ketoreductase (KR) domain. One can recognise a Carrier domain in the interval 2273–2347 (EILSGSLKQK…GLCLEAIGQW (75 aa)). At Ser2307 the chain carries O-(pantetheine 4'-phosphoryl)serine.

It functions in the pathway mycotoxin biosynthesis. In terms of biological role, reducing polyketide synthase; part of the gene clusters that mediate the biosynthesis of the host-selective toxins (HSTs) AF-toxins responsible for Alternaria black spot of strawberry disease by the strawberry pathotype. AF-toxin I and III are valine derivatives of 2,3-dyhydroxy-isovaleric acid and 2-hydroxy-isovaleric acid respectively, while AF II is an isoleucine derivative of 2-hydroxy-valeric acid. These derivatives are bound to a 9,10-epoxy-8-hydroxy-9-methyl-decatrienoic acid (EDA) moiety. On cellular level, AF-toxins affect plasma membrane of susceptible cells and cause a sudden increase in loss of K(+) after a few minutes of toxin treatment. The aldo-keto reductase AFTS1 catalyzes the conversion of 2-keto-isovaleric acid (2-KIV) to 2-hydroxy-isovaleric acid (2-HIV) by reduction of its ketone to an alcohol. The acyl-CoA ligase AFT1, the hydrolase AFT2 and the enoyl-CoA hydratases AFT3 and AFT6, but also the polyketide synthase AFT9, the acyl-CoA dehydrogenase AFT10, the cytochrome P450 monooxygenase AFT11 and the oxidoreductase AFT12 are all involved in the biosynthesis of the AK-, AF- and ACT-toxin common EDA structural moiety. The exact function of each enzyme, and of additional enzymes identified within the AF-toxin clusters have still to be determined. The polypeptide is Reducing polyketide synthase AFT16-1 (Alternaria alternata (Alternaria rot fungus)).